A 398-amino-acid chain; its full sequence is Serine/threonine-protein kinase UL13 (398 aa).

Gly residues predominate over residues 1–10 (MAAGGGGGGV). The segment at 1-44 (MAAGGGGGGVSRAALARPPIHRGTSAPGGAIAAAGGDGDGDEAS) is disordered. Positions 80–398 (TGDPVAVGAG…GGARFAELAA (319 aa)) constitute a Protein kinase domain. Residues 86–94 (VGAGSYGSV) and lysine 103 each bind ATP. The active-site Proton acceptor is the aspartate 194.

Belongs to the protein kinase superfamily. Ser/Thr protein kinase family. In terms of processing, autophosphorylated.

It is found in the virion tegument. The protein resides in the host nucleus. It localises to the host cytoplasm. The protein localises to the host endoplasmic reticulum. It catalyses the reaction L-seryl-[protein] + ATP = O-phospho-L-seryl-[protein] + ADP + H(+). The enzyme catalyses L-threonyl-[protein] + ATP = O-phospho-L-threonyl-[protein] + ADP + H(+). Functionally, multifunctional serine/threonine kinase that plays a role in several processes including egress of virus particles from the nucleus, modulation of the actin cytoskeleton and regulation of viral and cellular gene expression. Regulates the nuclear localization of viral envelopment factors UL34 and UL31, by phosphorylating the US3 kinase, indicating a role in nuclear egress. Disrupts host nuclear lamins, including LMNA and LMNB1. Phosphorylates the viral Fc receptor composed of glycoproteins E (gE) and I (gI). Phosphorylation of glycoprotein E (gE) by UL13 alters its subcellular localization, from the host early endosome to the plasma membrane. Participates in the transcriptional regulation of cellular and viral mRNAs mainly by phosphorylating the viral transcriptional regulator ICP22. Functions as an antagonist of the host RLR-mediated antiviral responses via suppression of the transcription of cytosolic receptors RIGI and IFIH1. Facilitates immune evasion also by recruiting host RNF5 to initiate the 'Lys-27'-/'Lys-29'-linked polyubiquitination of STING1; leading to its degradation. Blocks host IFN-beta transactivation mediated by the cGAS-STING pathway by phosphorylating host IRF3. In turn, IRF3 binding to the IRF3-responsive promoters and downstream interferon stimulated genes/ISG expression are greatly impaired. Induces the activation of the host DNA damage response via H2AX phosphorylation to improve efficient viral replication and progeny production. The sequence is that of Serine/threonine-protein kinase UL13 (UL13) from Suid herpesvirus 1 (strain NIA-3) (SuHV-1).